The primary structure comprises 341 residues: Small ribosomal subunit biogenesis GTPase RsgA (341 aa).

A CP-type G domain is found at 112–268; sequence RQQLIAANLD…LIDTPGMREL (157 aa). Residues 157–160 and 210–218 contribute to the GTP site; these read TKVD and GSSGAGKST. Zn(2+) is bound by residues C290, C295, H297, and C303.

The protein belongs to the TRAFAC class YlqF/YawG GTPase family. RsgA subfamily. As to quaternary structure, monomer. Associates with 30S ribosomal subunit, binds 16S rRNA. The cofactor is Zn(2+).

The protein resides in the cytoplasm. Its function is as follows. One of several proteins that assist in the late maturation steps of the functional core of the 30S ribosomal subunit. Helps release RbfA from mature subunits. May play a role in the assembly of ribosomal proteins into the subunit. Circularly permuted GTPase that catalyzes slow GTP hydrolysis, GTPase activity is stimulated by the 30S ribosomal subunit. The protein is Small ribosomal subunit biogenesis GTPase RsgA of Xylella fastidiosa (strain 9a5c).